Consider the following 153-residue polypeptide: Guanyl-specific ribonuclease N1 (153 aa).

Positions 1–20 (MVQLLSAFVSLLSVVAVSGA) are cleaved as a signal peptide. A propeptide spanning residues 21 to 49 (AIPAPAPEAVVDVAPETATIEPTGNFTAQ) is cleaved from the precursor. Disulfide bonds link Cys51/Cys59 and Cys55/Cys152. The active site involves His89. Catalysis depends on Glu107, which acts as the Proton acceptor. His141 (proton donor) is an active-site residue.

Belongs to the ribonuclease N1/T1 family.

It carries out the reaction [RNA] containing guanosine + H2O = an [RNA fragment]-3'-guanosine-3'-phosphate + a 5'-hydroxy-ribonucleotide-3'-[RNA fragment].. This Neurospora crassa (strain ATCC 24698 / 74-OR23-1A / CBS 708.71 / DSM 1257 / FGSC 987) protein is Guanyl-specific ribonuclease N1 (grn).